The following is a 344-amino-acid chain: Phenylalanine--tRNA ligase alpha subunit (344 aa).

E256 is a Mg(2+) binding site.

It belongs to the class-II aminoacyl-tRNA synthetase family. Phe-tRNA synthetase alpha subunit type 1 subfamily. In terms of assembly, tetramer of two alpha and two beta subunits. The cofactor is Mg(2+).

The protein resides in the cytoplasm. The enzyme catalyses tRNA(Phe) + L-phenylalanine + ATP = L-phenylalanyl-tRNA(Phe) + AMP + diphosphate + H(+). In Geobacillus kaustophilus (strain HTA426), this protein is Phenylalanine--tRNA ligase alpha subunit.